Reading from the N-terminus, the 130-residue chain is Phosphoribosyl-AMP cyclohydrolase (130 aa).

Residue Asp77 participates in Mg(2+) binding. Cys78 provides a ligand contact to Zn(2+). Positions 79 and 81 each coordinate Mg(2+). Zn(2+) contacts are provided by Cys95 and Cys102.

The protein belongs to the PRA-CH family. Homodimer. Requires Mg(2+) as cofactor. Zn(2+) serves as cofactor.

Its subcellular location is the cytoplasm. The enzyme catalyses 1-(5-phospho-beta-D-ribosyl)-5'-AMP + H2O = 1-(5-phospho-beta-D-ribosyl)-5-[(5-phospho-beta-D-ribosylamino)methylideneamino]imidazole-4-carboxamide. The protein operates within amino-acid biosynthesis; L-histidine biosynthesis; L-histidine from 5-phospho-alpha-D-ribose 1-diphosphate: step 3/9. Functionally, catalyzes the hydrolysis of the adenine ring of phosphoribosyl-AMP. This chain is Phosphoribosyl-AMP cyclohydrolase, found in Pseudomonas putida (strain W619).